Consider the following 448-residue polypeptide: MKSCEVNFDGLVGPTHNYGGLSYGNVASQSNSQQCANPREAALQGLAKMKALMDLGFTQGVLAPQERPDVAGLRQLGFIGSDEQVIEKAARQDMPLLVASCSASSMWVANAATVSPSADTADGRVHFTAANLNCKYHRSIEHPTTSRVLGAMFADAKHFAHHPALPPVAQFGDEGAANHTRFCQDYGQPGVEFFVFGRSAFDTRYPAPQKYPARQTLEASRAVARLHGLSEGGVVYAQQNPAVIDQGVFHNDVIAVGNGEVLFYHEDAFLNTEPMLNELRDKLGRVGGQLRAICVPRAEVSVQDAVRSYLFNSQLLSRPDGSMLLIVPQECQANASVWAYLQRLIADDSPVAQVKVFDLKQSMQNGGGPACLRLRVALKETELAAVNPGVIMTAPLYDTLTQWVDRHYRDRMSENDLADPRLLIQCRTALDELTQILKLGAVYPFQLN.

Substrate contacts are provided by residues 19 to 28 (GGLSYGNVAS), N110, and 137 to 138 (HR). Residue E174 is part of the active site. R214 provides a ligand contact to substrate. H250 is a catalytic residue. Substrate-binding residues include D252 and N365. C371 functions as the Nucleophile in the catalytic mechanism.

The protein belongs to the succinylarginine dihydrolase family. As to quaternary structure, homodimer.

It carries out the reaction N(2)-succinyl-L-arginine + 2 H2O + 2 H(+) = N(2)-succinyl-L-ornithine + 2 NH4(+) + CO2. The protein operates within amino-acid degradation; L-arginine degradation via AST pathway; L-glutamate and succinate from L-arginine: step 2/5. Its function is as follows. Catalyzes the hydrolysis of N(2)-succinylarginine into N(2)-succinylornithine, ammonia and CO(2). The protein is N-succinylarginine dihydrolase of Pseudomonas savastanoi pv. phaseolicola (strain 1448A / Race 6) (Pseudomonas syringae pv. phaseolicola (strain 1448A / Race 6)).